The following is a 121-amino-acid chain: Small ribosomal subunit protein uS13 (121 aa).

The segment at 89–121 is disordered; that stretch reads MRHRRGLPVRGQHTKNNARTRKGKAVSIAGKKK.

This sequence belongs to the universal ribosomal protein uS13 family. In terms of assembly, part of the 30S ribosomal subunit. Forms a loose heterodimer with protein S19. Forms two bridges to the 50S subunit in the 70S ribosome.

Its function is as follows. Located at the top of the head of the 30S subunit, it contacts several helices of the 16S rRNA. In the 70S ribosome it contacts the 23S rRNA (bridge B1a) and protein L5 of the 50S subunit (bridge B1b), connecting the 2 subunits; these bridges are implicated in subunit movement. Contacts the tRNAs in the A and P-sites. The polypeptide is Small ribosomal subunit protein uS13 (Levilactobacillus brevis (strain ATCC 367 / BCRC 12310 / CIP 105137 / JCM 1170 / LMG 11437 / NCIMB 947 / NCTC 947) (Lactobacillus brevis)).